The primary structure comprises 419 residues: C2 calcium-dependent domain-containing protein 4C (419 aa).

Disordered stretches follow at residues 1-96, 115-136, 151-225, and 247-300; these read MRKT…LASE, EDWT…MSLP, AESP…SPFG, and VSQL…HTVK. The segment covering 75–94 has biased composition (low complexity); sequence LASPGPRRAPRSPRLPAKLA. Gly residues predominate over residues 186–196; sequence KGNGGDGGSRE. The span at 212–225 shows a compositional bias: polar residues; the sequence is ESDTGSSAESSPFG. 3 positions are modified to phosphoserine: S259, S261, and S270. Residues 303–419 enclose the C2 domain; the sequence is TRGSVRLLAE…LPLTSLLPFL (117 aa).

It belongs to the C2CD4 family.

The protein is C2 calcium-dependent domain-containing protein 4C (C2cd4c) of Mus musculus (Mouse).